The primary structure comprises 689 residues: Elongation factor G (689 aa).

The tr-type G domain occupies E8–T282. Residues A17–T24, D81–H85, and N135–D138 contribute to the GTP site.

The protein belongs to the TRAFAC class translation factor GTPase superfamily. Classic translation factor GTPase family. EF-G/EF-2 subfamily.

The protein localises to the cytoplasm. Functionally, catalyzes the GTP-dependent ribosomal translocation step during translation elongation. During this step, the ribosome changes from the pre-translocational (PRE) to the post-translocational (POST) state as the newly formed A-site-bound peptidyl-tRNA and P-site-bound deacylated tRNA move to the P and E sites, respectively. Catalyzes the coordinated movement of the two tRNA molecules, the mRNA and conformational changes in the ribosome. This Desulforudis audaxviator (strain MP104C) protein is Elongation factor G.